The primary structure comprises 328 residues: Transcription factor bHLH25 (328 aa).

A disordered region spans residues 125–152 (PHQKSDEFNRKGTKRAQPFSRNQSNAQD). The bHLH domain maps to 148-197 (SNAQDHIIAERKRREKLTQRFVALSALVPGLKKMDKASVLGDALKHIKYL).

As to quaternary structure, homodimer. Expressed in flowers.

The protein resides in the nucleus. This is Transcription factor bHLH25 (BHLH25) from Arabidopsis thaliana (Mouse-ear cress).